A 443-amino-acid chain; its full sequence is Ribosomal protein uS12 methylthiotransferase RimO (443 aa).

Residues 5–115 (PNIGFISLGC…VMQHVHKYVP (111 aa)) form the MTTase N-terminal domain. The [4Fe-4S] cluster site is built by C14, C50, C79, C147, C151, and C154. One can recognise a Radical SAM core domain in the interval 133–374 (LTPKHYAYLK…MQVQQRISVA (242 aa)). One can recognise a TRAM domain in the interval 377 to 443 (QQKIGKTLAI…ADEYDLWGTY (67 aa)).

The protein belongs to the methylthiotransferase family. RimO subfamily. [4Fe-4S] cluster is required as a cofactor.

It is found in the cytoplasm. It carries out the reaction L-aspartate(89)-[ribosomal protein uS12]-hydrogen + (sulfur carrier)-SH + AH2 + 2 S-adenosyl-L-methionine = 3-methylsulfanyl-L-aspartate(89)-[ribosomal protein uS12]-hydrogen + (sulfur carrier)-H + 5'-deoxyadenosine + L-methionine + A + S-adenosyl-L-homocysteine + 2 H(+). Its function is as follows. Catalyzes the methylthiolation of an aspartic acid residue of ribosomal protein uS12. The protein is Ribosomal protein uS12 methylthiotransferase RimO of Haemophilus ducreyi (strain 35000HP / ATCC 700724).